The primary structure comprises 107 residues: Ig kappa chain V-VI region SAPC 10 (107 aa).

Residues 1 to 23 (EIVLTQSPAITAASLGQKVTITC) are framework-1. Cys23 and Cys87 are joined by a disulfide. The interval 24 to 33 (SASSSVSYMH) is complementarity-determining-1. Residues 34–48 (WYQQKSGTSPKPWIY) form a framework-2 region. The complementarity-determining-2 stretch occupies residues 49–55 (EISKLAS). The segment at 56–87 (GVPARFSGSGSGTSYSLTISSMEAEDAAIYYC) is framework-3. Residues 88 to 96 (QQWNYPLIT) form a complementarity-determining-3 region. Residues 97–106 (FGGGTKLEIK) are framework-4.

In Mus musculus (Mouse), this protein is Ig kappa chain V-VI region SAPC 10.